Reading from the N-terminus, the 783-residue chain is Galactinol--sucrose galactosyltransferase (783 aa).

The protein belongs to the glycosyl hydrolases 36 family.

It carries out the reaction alpha-D-galactosyl-(1-&gt;3)-1D-myo-inositol + sucrose = raffinose + myo-inositol. Inhibited by Ag(2)+, Hg(2+), Zn(2+), p-chloromercuribenzoate (pCMB) and 1-deoxygalactonojirimycin. Transglycosidase operating by a ping-pong reaction mechanism. Involved in the synthesis of raffinose, a major soluble carbohydrate in seeds, roots and tubers. Specific for galactinol and p-nitrophenyl-alpha-D-galactoside as galactosyl donors. Able to utilize sucrose, lactose, 4-beta-galactobiose, N-acetyl-D-lactosamine, trehalose and lacto-N-biose as acceptors. May also act as a glycoside hydrolase. In Oryza sativa subsp. japonica (Rice), this protein is Galactinol--sucrose galactosyltransferase (RFS).